Consider the following 383-residue polypeptide: Putative glutamate--cysteine ligase 2-2 (383 aa).

Residues 35–56 form a disordered region; that stretch reads RGDRDGAGGPPGGADPDGDLDG.

Belongs to the glutamate--cysteine ligase type 2 family. YbdK subfamily.

It carries out the reaction L-cysteine + L-glutamate + ATP = gamma-L-glutamyl-L-cysteine + ADP + phosphate + H(+). In terms of biological role, ATP-dependent carboxylate-amine ligase which exhibits weak glutamate--cysteine ligase activity. This chain is Putative glutamate--cysteine ligase 2-2, found in Frankia alni (strain DSM 45986 / CECT 9034 / ACN14a).